The primary structure comprises 1032 residues: Integrin alpha-4 (1032 aa).

The first 34 residues, 1–34 (MIRDLGKVGKVSLLLDHIWTGILLYTVILTPADC), serve as a signal peptide directing secretion. The Extracellular portion of the chain corresponds to 35 to 974 (YNIDESSPML…LHNLKPKKHV (940 aa)). FG-GAP repeat units follow at residues 36–100 (NIDE…PNRT), 113–177 (KCGK…TELS), 186–237 (DHVR…TIKS), 238–291 (YVDL…EKQL), 292–351 (TILF…GAME), 353–411 (LKFE…GITP), and 415–477 (QRLQ…LPST). 2 N-linked (GlcNAc...) asparagine glycosylation sites follow: Asn-81 and Asn-98. 3 disulfides stabilise this stretch: Cys-91/Cys-101, Cys-144/Cys-165, and Cys-183/Cys-198. A glycan (N-linked (GlcNAc...) asparagine) is linked at Asn-229. Ca(2+)-binding residues include Asp-314, Asn-316, Asp-318, Leu-320, Asp-322, Asp-376, Asp-378, Asp-380, Asp-384, Asp-438, Asp-440, Asn-442, Tyr-444, and Asp-446. Asn-479 carries an N-linked (GlcNAc...) asparagine glycan. Cysteines 485 and 494 form a disulfide. Residues Asn-496, Asn-517, Asn-537, Asn-626, and Asn-660 are each glycosylated (N-linked (GlcNAc...) asparagine). 2 disulfides stabilise this stretch: Cys-500–Cys-556 and Cys-622–Cys-627. Cys-698 and Cys-712 are disulfide-bonded. Residues Asn-746 and Asn-857 are each glycosylated (N-linked (GlcNAc...) asparagine). Disulfide bonds link Cys-853-Cys-889 and Cys-896-Cys-901. Residues 975–998 (IYMIIGISLLLGILLFSLLTYILW) form a helical membrane-spanning segment. Residues 999-1032 (KVGFFRRKYQPIGTEETSRRESWNYLNKDEKEVK) are Cytoplasmic-facing. A GFFKR motif motif is present at residues 1001–1005 (GFFRR).

Belongs to the integrin alpha chain family. Heterodimer of an alpha and a beta subunit.

It is found in the membrane. In terms of biological role, fibronectin and V-CAM adhesion receptor. This is Integrin alpha-4 (itga4) from Xenopus laevis (African clawed frog).